The sequence spans 78 residues: MNKELSFEEGIEHLERIVRELEQKEVPLEQALNLFRQGIELVQKCNNQLDYAEKQMQILLENPNGELEVRPADFPVEG.

This sequence belongs to the XseB family. In terms of assembly, heterooligomer composed of large and small subunits.

Its subcellular location is the cytoplasm. The enzyme catalyses Exonucleolytic cleavage in either 5'- to 3'- or 3'- to 5'-direction to yield nucleoside 5'-phosphates.. Functionally, bidirectionally degrades single-stranded DNA into large acid-insoluble oligonucleotides, which are then degraded further into small acid-soluble oligonucleotides. This is Exodeoxyribonuclease 7 small subunit from Desulfitobacterium hafniense (strain Y51).